Here is a 57-residue protein sequence, read N- to C-terminus: Myrmicitoxin(1)-Pm7a (57 aa).

Positions M1–A23 are cleaved as a signal peptide. Residues E24 to A31 constitute a propeptide that is removed on maturation.

This sequence belongs to the formicidae venom clade 4 family. As to expression, expressed by the venom gland.

It is found in the secreted. Functionally, probable neurotoxin. This Pogonomyrmex maricopa (Maricopa harvester ant) protein is Myrmicitoxin(1)-Pm7a.